Consider the following 706-residue polypeptide: Envelope glycoprotein H (706 aa).

An N-terminal signal peptide occupies residues 1 to 18 (MQLLCVFCLVLLWEVGAA). At 19-682 (SLSEVKLHLD…LYEERAHVVL (664 aa)) the chain is on the virion surface side. A glycan (N-linked (GlcNAc...) asparagine; by host) is linked at Asn-60. Intrachain disulfides connect Cys-120-Cys-312 and Cys-278-Cys-335. Residues 165-229 (DKFQYTGAMT…QSGDYSLVIV (65 aa)) are interaction with gL. N-linked (GlcNAc...) asparagine; by host glycosylation occurs at Asn-435. 2 cysteine pairs are disulfide-bonded: Cys-454/Cys-478 and Cys-534/Cys-587. 2 N-linked (GlcNAc...) asparagine; by host glycosylation sites follow: Asn-549 and Asn-604. Cysteines 612 and 615 form a disulfide. N-linked (GlcNAc...) asparagine; by host glycosylation occurs at Asn-664. A helical transmembrane segment spans residues 683 to 703 (AIILYFIAFALGIFLVHKIVM). Residues 704–706 (FFL) lie on the Intravirion side of the membrane.

It belongs to the herpesviridae glycoprotein H family. In terms of assembly, interacts with glycoprotein L (gL); this interaction is necessary for the correct processing and cell surface expression of gH. The heterodimer gH/gL seems to interact with gB trimers during fusion. The heterodimer gH/gL interacts with host EPHA2 to facilitate virus internalization and fusion. Interacts with glycoprotein 42/BZLF2. In terms of processing, N-glycosylated, O-glycosylated, and sialylated.

It localises to the virion membrane. Its subcellular location is the host cell membrane. It is found in the host endosome membrane. Functionally, the heterodimer glycoprotein H-glycoprotein L is required for the fusion of viral and plasma membranes leading to virus entry into the host cell. Following initial binding to host receptor, membrane fusion is mediated by the fusion machinery composed of gB and the heterodimer gH/gL. May also be involved in the fusion between the virion envelope and the outer nuclear membrane during virion morphogenesis. The heterodimer gH/gL targets also host EPHA2 to promote viral entry. The chain is Envelope glycoprotein H from Homo sapiens (Human).